A 550-amino-acid chain; its full sequence is Hydroxylamine reductase (550 aa).

[2Fe-2S] cluster is bound by residues Cys-3, Cys-6, Cys-18, and Cys-25. His-249, Glu-273, Cys-317, Cys-405, Cys-433, Cys-458, Glu-492, and Lys-494 together coordinate hybrid [4Fe-2O-2S] cluster. Residue Cys-405 is modified to Cysteine persulfide.

Belongs to the HCP family. [2Fe-2S] cluster serves as cofactor. The cofactor is hybrid [4Fe-2O-2S] cluster.

It localises to the cytoplasm. It carries out the reaction A + NH4(+) + H2O = hydroxylamine + AH2 + H(+). Catalyzes the reduction of hydroxylamine to form NH(3) and H(2)O. The sequence is that of Hydroxylamine reductase from Shigella boydii serotype 18 (strain CDC 3083-94 / BS512).